The primary structure comprises 738 residues: MSPSPTRLTVRSVDPLKTPNLTSRAPVRPSRKSKWAETTAHLQRKPCHSRSNSPAWEISGPPWSSLDHLDPIRHQSLQPSDFGARTPTGAHPGLGAYSPPPEEAMPFEFNEPAQEDRCQPPLQVPDLAPGGPEAWVSRALPAEPGNLGFENTGFREDYSPPPEESVPFQLDGEEFGGDSPPPDSASHATNRHWRFEFPTVAVPSTLCLRPARTRLPSGSRAPLADHARLSDLLTSHTTFPQWRSPDPCLRLAEPPLGSTTTPLSIWTAPQSQVMARPSKSREPQLRASTQRDPHLSDKQPRQETALSAAPLQRRQKSPPSSEEKDPPPNLKQCISSQLLLRSPERTLPKPIRTQLHTQFFRSVLRKSEESQPCPPIFRLLLKMRAQMSGQNQTEGQPQPPLPSPKTTENQPPPPPPSQPPSQPLSQPPSQPPSQPPSQLPRQSLTPKPSLPPGQSPTPKRSPQPRQPLPRRRSLPPGQPPSPLRSPLPGLSLLPEPIQPPGLSLEPQRCQPLLGQPPLEQPMQVLWSGEPGHSRLLQPLGHPSLPAQQLPPEQPLLPAQSLPAGQPLPPQAGPILDPPARRSRLLTRLLRGLLRGRVPGLTNTNVAEAAAGMRLRPASARSSPPAMSRKKGPLAASSGFCGETAALASPGATQSGATRSATSSPEPSEAASVYLSVPDHDPSAPGRPRILWKRGANRCAKKPWRCESRSAQIRNAASSSTSNWRRRRWTTCVHTACCF.

Disordered stretches follow at residues Met-1–Met-105, Arg-155–Ala-188, Thr-237–Pro-350, Met-387–Pro-516, Gly-528–Pro-578, and Gly-611–Ile-689. Positions Gly-257–Val-273 are enriched in polar residues. A compositionally biased stretch (basic and acidic residues) spans Lys-279–Arg-301. The segment covering Met-387–Gln-396 has biased composition (polar residues). Pro residues-rich tracts occupy residues Gln-410 to Gln-438, Pro-448 to Pro-467, and Pro-476 to Ser-485. Composition is skewed to low complexity over residues Pro-542–Gly-564, Arg-615–Met-626, and Ala-656–Ser-671.

Belongs to the ALEX family. In terms of assembly, interacts with the N-terminal region of the XLas isoforms of guanine nucleotide-binding protein G(s) subunit alpha.

It localises to the cell membrane. It is found in the cell projection. The protein resides in the ruffle. Functionally, may inhibit the adenylyl cyclase-stimulating activity of guanine nucleotide-binding protein G(s) subunit alpha which is produced from the same locus in a different open reading frame. The sequence is that of Protein ALEX from Rattus norvegicus (Rat).